Here is a 30-residue protein sequence, read N- to C-terminus: Trypsin inhibitor 2 (30 aa).

3 disulfides stabilise this stretch: Cys3/Cys20, Cys10/Cys22, and Cys16/Cys29.

The protein belongs to the protease inhibitor I7 (squash-type serine protease inhibitor) family.

The protein resides in the secreted. Functionally, inhibits trypsin. The chain is Trypsin inhibitor 2 from Luffa aegyptiaca (Sponge gourd).